Consider the following 380-residue polypeptide: Tetraacyldisaccharide 4'-kinase (380 aa).

51-58 (SVGGTGKT) provides a ligand contact to ATP.

It belongs to the LpxK family.

The enzyme catalyses a lipid A disaccharide + ATP = a lipid IVA + ADP + H(+). The protein operates within glycolipid biosynthesis; lipid IV(A) biosynthesis; lipid IV(A) from (3R)-3-hydroxytetradecanoyl-[acyl-carrier-protein] and UDP-N-acetyl-alpha-D-glucosamine: step 6/6. Transfers the gamma-phosphate of ATP to the 4'-position of a tetraacyldisaccharide 1-phosphate intermediate (termed DS-1-P) to form tetraacyldisaccharide 1,4'-bis-phosphate (lipid IVA). The sequence is that of Tetraacyldisaccharide 4'-kinase from Bacteroides thetaiotaomicron (strain ATCC 29148 / DSM 2079 / JCM 5827 / CCUG 10774 / NCTC 10582 / VPI-5482 / E50).